The following is a 320-amino-acid chain: Malate dehydrogenase (320 aa).

NAD(+) contacts are provided by residues 10-15 (GAGQIG) and Asp-34. Arg-83 and Arg-89 together coordinate substrate. Residues Asn-96 and 119–121 (ITN) contribute to the NAD(+) site. Substrate contacts are provided by Asn-121 and Arg-152. Catalysis depends on His-176, which acts as the Proton acceptor.

Belongs to the LDH/MDH superfamily. MDH type 3 family.

The enzyme catalyses (S)-malate + NAD(+) = oxaloacetate + NADH + H(+). In terms of biological role, catalyzes the reversible oxidation of malate to oxaloacetate. The polypeptide is Malate dehydrogenase (Methylorubrum extorquens (strain CM4 / NCIMB 13688) (Methylobacterium extorquens)).